A 612-amino-acid chain; its full sequence is Glutamine--fructose-6-phosphate aminotransferase [isomerizing] (612 aa).

The active-site Nucleophile; for GATase activity is the Cys2. Residues 2 to 219 (CGIVGANSTR…EGDIAIISKD (218 aa)) form the Glutamine amidotransferase type-2 domain. SIS domains lie at 287-427 (AKEL…LKNS) and 460-602 (ISEY…VDQP). The For Fru-6P isomerization activity role is filled by Lys607.

Homodimer.

It is found in the cytoplasm. It catalyses the reaction D-fructose 6-phosphate + L-glutamine = D-glucosamine 6-phosphate + L-glutamate. Functionally, catalyzes the first step in hexosamine metabolism, converting fructose-6P into glucosamine-6P using glutamine as a nitrogen source. The chain is Glutamine--fructose-6-phosphate aminotransferase [isomerizing] from Francisella tularensis subsp. tularensis (strain SCHU S4 / Schu 4).